Here is a 440-residue protein sequence, read N- to C-terminus: Gap junction alpha-8 protein (440 aa).

Residues 2–12 (GDWSFLGNILE) lie within the membrane without spanning it. Over 13–21 (EVNEHSTVI) the chain is Cytoplasmic. Residues 22–42 (GRVWLTVLFIFRILILGTAAE) traverse the membrane as a helical segment. The Extracellular segment spans residues 43 to 71 (FVWGDEQSDFVCNTQQPGCENVCYDEAFP). 3 cysteine pairs are disulfide-bonded: C54–C201, C61–C195, and C65–C190. The chain crosses the membrane as a helical span at residues 72–92 (ISHIRLWVLQIIFVSTPSLMY). Residues 93–161 (VGHAVHHVRM…GTLLRTYVCH (69 aa)) lie on the Cytoplasmic side of the membrane. The disordered stretch occupies residues 111 to 143 (AEELCQQSRSNGGERVPIAPDQASIRKSSSSSK). A helical transmembrane segment spans residues 162–182 (IIFKTLFEVGFIVGHYFLYGF). Over 183–210 (RILPLYRCSRWPCPNVVDCFVSRPTEKT) the chain is Extracellular. Residues 211-231 (IFILFMLSVAFVSLFLNIMEM) form a helical membrane-spanning segment. Topologically, residues 232–440 (SHLGMKGIRS…SRARSDDLTI (209 aa)) are cytoplasmic. The interval 338–440 (VEREEPPIEE…SRARSDDLTI (103 aa)) is disordered. Composition is skewed to basic and acidic residues over residues 353-364 (VGEKKQEAEKVA) and 374-399 (PDRERVETPGVGKEDEKEELQAEKVT). Over residues 423–432 (LSRLSKASSR) the composition is skewed to low complexity.

It belongs to the connexin family. Alpha-type (group II) subfamily. A hemichannel or connexon is composed of a hexamer of connexins. A functional gap junction is formed by the apposition of two hemichannels. Forms heteromeric channels with GJA3. Detected in eye lens (at protein level). Eye lens.

The protein localises to the cell membrane. It is found in the cell junction. The protein resides in the gap junction. Its function is as follows. Structural component of eye lens gap junctions. Gap junctions are dodecameric channels that connect the cytoplasm of adjoining cells. They are formed by the docking of two hexameric hemichannels, one from each cell membrane. Small molecules and ions diffuse from one cell to a neighboring cell via the central pore. The polypeptide is Gap junction alpha-8 protein (Gja8) (Mus musculus (Mouse)).